The sequence spans 220 residues: Ribosomal RNA small subunit methyltransferase G 1 (220 aa).

Positions 79, 84, and 150 each coordinate S-adenosyl-L-methionine.

Belongs to the methyltransferase superfamily. RNA methyltransferase RsmG family.

The protein resides in the cytoplasm. It carries out the reaction guanosine(527) in 16S rRNA + S-adenosyl-L-methionine = N(7)-methylguanosine(527) in 16S rRNA + S-adenosyl-L-homocysteine. Functionally, specifically methylates the N7 position of guanine in position 527 of 16S rRNA. This is Ribosomal RNA small subunit methyltransferase G 1 from Syntrophobacter fumaroxidans (strain DSM 10017 / MPOB).